Reading from the N-terminus, the 454-residue chain is tRNA modification GTPase MnmE (454 aa).

Residues arginine 23, glutamate 80, and lysine 120 each contribute to the (6S)-5-formyl-5,6,7,8-tetrahydrofolate site. The TrmE-type G domain maps to 216–377 (GMKVVIAGRP…LRDHLKSSMG (162 aa)). Asparagine 226 is a K(+) binding site. GTP-binding positions include 226–231 (NAGKSS), 245–251 (TDIAGTT), 270–273 (DTAG), 335–338 (NKAD), and 358–360 (SAR). Residue serine 230 coordinates Mg(2+). Residues threonine 245, isoleucine 247, and threonine 250 each coordinate K(+). Threonine 251 serves as a coordination point for Mg(2+). Lysine 454 contributes to the (6S)-5-formyl-5,6,7,8-tetrahydrofolate binding site.

The protein belongs to the TRAFAC class TrmE-Era-EngA-EngB-Septin-like GTPase superfamily. TrmE GTPase family. As to quaternary structure, homodimer. Heterotetramer of two MnmE and two MnmG subunits. Requires K(+) as cofactor.

It is found in the cytoplasm. Functionally, exhibits a very high intrinsic GTPase hydrolysis rate. Involved in the addition of a carboxymethylaminomethyl (cmnm) group at the wobble position (U34) of certain tRNAs, forming tRNA-cmnm(5)s(2)U34. The chain is tRNA modification GTPase MnmE from Erwinia tasmaniensis (strain DSM 17950 / CFBP 7177 / CIP 109463 / NCPPB 4357 / Et1/99).